Consider the following 220-residue polypeptide: Peptide methionine sulfoxide reductase MsrA (220 aa).

The active site involves Cys-54.

The protein belongs to the MsrA Met sulfoxide reductase family.

It catalyses the reaction L-methionyl-[protein] + [thioredoxin]-disulfide + H2O = L-methionyl-(S)-S-oxide-[protein] + [thioredoxin]-dithiol. The catalysed reaction is [thioredoxin]-disulfide + L-methionine + H2O = L-methionine (S)-S-oxide + [thioredoxin]-dithiol. Has an important function as a repair enzyme for proteins that have been inactivated by oxidation. Catalyzes the reversible oxidation-reduction of methionine sulfoxide in proteins to methionine. This is Peptide methionine sulfoxide reductase MsrA from Salinispora arenicola (strain CNS-205).